The chain runs to 207 residues: Large ribosomal subunit protein uL3 (207 aa).

The tract at residues 113–148 (KGKGFQGPIKRHGQSRGPMAHGSRYHRRPGSMGPVA) is disordered.

This sequence belongs to the universal ribosomal protein uL3 family. In terms of assembly, part of the 50S ribosomal subunit. Forms a cluster with proteins L14 and L19.

Functionally, one of the primary rRNA binding proteins, it binds directly near the 3'-end of the 23S rRNA, where it nucleates assembly of the 50S subunit. This chain is Large ribosomal subunit protein uL3, found in Lactococcus lactis subsp. lactis (strain IL1403) (Streptococcus lactis).